The following is a 545-amino-acid chain: CTP synthase (545 aa).

The amidoligase domain stretch occupies residues 1–267 (MTKFIFVTGG…AEQTLKLLQM (267 aa)). Position 13 (S13) interacts with CTP. Residue S13 participates in UTP binding. ATP-binding positions include 14-19 (SIGKGI) and D71. Mg(2+) contacts are provided by D71 and E141. CTP contacts are provided by residues 148-150 (DIE), 188-193 (KTKPTQ), and K224. Residues 188–193 (KTKPTQ) and K224 contribute to the UTP site. One can recognise a Glutamine amidotransferase type-1 domain in the interval 292 to 534 (EIAIVGKYVS…VQAAIAQSHP (243 aa)). G354 is a binding site for L-glutamine. Residue C381 is the Nucleophile; for glutamine hydrolysis of the active site. Residues 382–385 (LGMQ), E405, and R462 each bind L-glutamine. Catalysis depends on residues H507 and E509.

This sequence belongs to the CTP synthase family. In terms of assembly, homotetramer.

It catalyses the reaction UTP + L-glutamine + ATP + H2O = CTP + L-glutamate + ADP + phosphate + 2 H(+). It carries out the reaction L-glutamine + H2O = L-glutamate + NH4(+). The catalysed reaction is UTP + NH4(+) + ATP = CTP + ADP + phosphate + 2 H(+). Its pathway is pyrimidine metabolism; CTP biosynthesis via de novo pathway; CTP from UDP: step 2/2. Its activity is regulated as follows. Allosterically activated by GTP, when glutamine is the substrate; GTP has no effect on the reaction when ammonia is the substrate. The allosteric effector GTP functions by stabilizing the protein conformation that binds the tetrahedral intermediate(s) formed during glutamine hydrolysis. Inhibited by the product CTP, via allosteric rather than competitive inhibition. Functionally, catalyzes the ATP-dependent amination of UTP to CTP with either L-glutamine or ammonia as the source of nitrogen. Regulates intracellular CTP levels through interactions with the four ribonucleotide triphosphates. The chain is CTP synthase from Trichormus variabilis (strain ATCC 29413 / PCC 7937) (Anabaena variabilis).